The chain runs to 364 residues: Nicotinate-nucleotide--dimethylbenzimidazole phosphoribosyltransferase (364 aa).

The active-site Proton acceptor is E332.

It belongs to the CobT family.

The enzyme catalyses 5,6-dimethylbenzimidazole + nicotinate beta-D-ribonucleotide = alpha-ribazole 5'-phosphate + nicotinate + H(+). It functions in the pathway nucleoside biosynthesis; alpha-ribazole biosynthesis; alpha-ribazole from 5,6-dimethylbenzimidazole: step 1/2. Its function is as follows. Catalyzes the synthesis of alpha-ribazole-5'-phosphate from nicotinate mononucleotide (NAMN) and 5,6-dimethylbenzimidazole (DMB). In Salinispora tropica (strain ATCC BAA-916 / DSM 44818 / JCM 13857 / NBRC 105044 / CNB-440), this protein is Nicotinate-nucleotide--dimethylbenzimidazole phosphoribosyltransferase.